We begin with the raw amino-acid sequence, 922 residues long: Periodic tryptophan protein 2 homolog (922 aa).

WD repeat units follow at residues 12–52 (GTVY…TLPI), 53–92 (QSKYNIRRLALSPNGQILITSDESGHTLIINLTRQVVLGE), 94–132 (KFFKTPKSILFSPNGAIIAIAVLEKVFLFKTPIIQKQPN), 141–180 (THKSAVISMCWSADSLKLMIGCKNGTLLIRQGKSERVSYF), 182–221 (VKGSGIINCFFGNEESTIAYAVTPTGLASWDYKTNEEMEQ), 271–310 (GVKCKVKTVCFHLKSKLLLVGFSTGQFILYEMPGFNQLYK), 313–353 (ISSH…YILK), 356–395 (GHSYNMNTVAYSPDGQTIATGGEDGKVKIWNTTSGYCYIT), 398–439 (EHEG…NFRT), 443–485 (PNKT…DILS), 486–525 (GHQSPVCELAFDPINPFLASASWDKSCKIWNIFEDREIRE), 528–567 (QHTSDVLTCAYSQDGKKFIVSCLDGTIQIYETSTWGQIGL), 590–629 (SAGRAFTKIAFTPNGECIIAGGNSKYICIYHIDQQVLIKK), and 691–731 (KKKQ…DPTD). The disordered stretch occupies residues 893-922 (ESKKNKEQEEDQFSDDEETVYQNNKKNKNK). Residues 900–911 (QEEDQFSDDEET) show a composition bias toward acidic residues.

This sequence belongs to the WD repeat PWP2 family. In terms of assembly, part of the small subunit (SSU) processome, composed of more than 70 proteins and the RNA chaperone small nucleolar RNA (snoRNA) U3.

Its subcellular location is the nucleus. The protein resides in the nucleolus. Its function is as follows. Part of the small subunit (SSU) processome, first precursor of the small eukaryotic ribosomal subunit. During the assembly of the SSU processome in the nucleolus, many ribosome biogenesis factors, an RNA chaperone and ribosomal proteins associate with the nascent pre-rRNA and work in concert to generate RNA folding, modifications, rearrangements and cleavage as well as targeted degradation of pre-ribosomal RNA by the RNA exosome. The protein is Periodic tryptophan protein 2 homolog (pwp2) of Dictyostelium discoideum (Social amoeba).